Consider the following 509-residue polypeptide: tRNA-2-methylthio-N(6)-dimethylallyladenosine synthase (509 aa).

Residues 1 to 15 (MNEQQRLASRQANSS) are compositionally biased toward polar residues. Residues 1–25 (MNEQQRLASRQANSSTKKEEKDYSK) form a disordered region. Over residues 16-25 (TKKEEKDYSK) the composition is skewed to basic and acidic residues. Residues 66–184 (RKFYIRTYGC…LPYILKDAMF (119 aa)) form the MTTase N-terminal domain. The [4Fe-4S] cluster site is built by C75, C111, C145, C221, C225, and C228. One can recognise a Radical SAM core domain in the interval 207-437 (RRGDIKAWVN…NTLVNEYGVN (231 aa)). The TRAM domain maps to 440–503 (KRYIGQIVEV…TWSLNGELVK (64 aa)).

It belongs to the methylthiotransferase family. MiaB subfamily. In terms of assembly, monomer. [4Fe-4S] cluster is required as a cofactor.

The protein resides in the cytoplasm. It catalyses the reaction N(6)-dimethylallyladenosine(37) in tRNA + (sulfur carrier)-SH + AH2 + 2 S-adenosyl-L-methionine = 2-methylsulfanyl-N(6)-dimethylallyladenosine(37) in tRNA + (sulfur carrier)-H + 5'-deoxyadenosine + L-methionine + A + S-adenosyl-L-homocysteine + 2 H(+). In terms of biological role, catalyzes the methylthiolation of N6-(dimethylallyl)adenosine (i(6)A), leading to the formation of 2-methylthio-N6-(dimethylallyl)adenosine (ms(2)i(6)A) at position 37 in tRNAs that read codons beginning with uridine. This is tRNA-2-methylthio-N(6)-dimethylallyladenosine synthase from Bacillus mycoides (strain KBAB4) (Bacillus weihenstephanensis).